Consider the following 141-residue polypeptide: Hemoglobin subunit alpha-A (141 aa).

The region spanning 1-141 is the Globin domain; it reads VLSASDKSNV…VGTVLTAKYR (141 aa). Histidine 58 contacts O2. Position 87 (histidine 87) interacts with heme b.

The protein belongs to the globin family. As to quaternary structure, heterotetramer of two alpha chains and two beta chains. In terms of tissue distribution, red blood cells.

Involved in oxygen transport from the lung to the various peripheral tissues. The polypeptide is Hemoglobin subunit alpha-A (HBAA) (Streptopelia orientalis (Eastern turtle dove)).